The primary structure comprises 340 residues: DNA-directed RNA polymerase subunit alpha (340 aa).

The tract at residues 1-233 (MIQDEIPIPV…DLFIIFLNME (233 aa)) is alpha N-terminal domain (alpha-NTD). Residues 264–340 (AKEVAFKQIF…QLPKDQFNIS (77 aa)) are alpha C-terminal domain (alpha-CTD).

This sequence belongs to the RNA polymerase alpha chain family. In plastids the minimal PEP RNA polymerase catalytic core is composed of four subunits: alpha, beta, beta', and beta''. When a (nuclear-encoded) sigma factor is associated with the core the holoenzyme is formed, which can initiate transcription.

The protein localises to the plastid. The protein resides in the chloroplast. It catalyses the reaction RNA(n) + a ribonucleoside 5'-triphosphate = RNA(n+1) + diphosphate. Functionally, DNA-dependent RNA polymerase catalyzes the transcription of DNA into RNA using the four ribonucleoside triphosphates as substrates. The chain is DNA-directed RNA polymerase subunit alpha from Psilotum nudum (Whisk fern).